The following is a 256-amino-acid chain: Uridylate kinase (256 aa).

10–13 lines the ATP pocket; sequence KLSG. Residue Gly52 coordinates UMP. Residues Gly53 and Arg57 each coordinate ATP. UMP-binding positions include Asp72 and 134-141; that span reads NGQPFLTT. Tyr168 and Asp171 together coordinate ATP.

It belongs to the UMP kinase family. Homohexamer.

It is found in the cytoplasm. The enzyme catalyses UMP + ATP = UDP + ADP. Its pathway is pyrimidine metabolism; CTP biosynthesis via de novo pathway; UDP from UMP (UMPK route): step 1/1. With respect to regulation, inhibited by UTP. Functionally, catalyzes the reversible phosphorylation of UMP to UDP. The sequence is that of Uridylate kinase from Frankia alni (strain DSM 45986 / CECT 9034 / ACN14a).